A 374-amino-acid chain; its full sequence is Queuine tRNA-ribosyltransferase (374 aa).

Residue aspartate 89 is the Proton acceptor of the active site. Substrate contacts are provided by residues 89–93 (DSGGF), aspartate 143, glutamine 187, and glycine 214. The interval 245–251 (GVGKPED) is RNA binding. The active-site Nucleophile is the aspartate 264. Residues 269–273 (TRNAR) are RNA binding; important for wobble base 34 recognition. Zn(2+)-binding residues include cysteine 302, cysteine 304, cysteine 307, and histidine 333.

Belongs to the queuine tRNA-ribosyltransferase family. As to quaternary structure, homodimer. Within each dimer, one monomer is responsible for RNA recognition and catalysis, while the other monomer binds to the replacement base PreQ1. Requires Zn(2+) as cofactor.

The enzyme catalyses 7-aminomethyl-7-carbaguanine + guanosine(34) in tRNA = 7-aminomethyl-7-carbaguanosine(34) in tRNA + guanine. The protein operates within tRNA modification; tRNA-queuosine biosynthesis. Catalyzes the base-exchange of a guanine (G) residue with the queuine precursor 7-aminomethyl-7-deazaguanine (PreQ1) at position 34 (anticodon wobble position) in tRNAs with GU(N) anticodons (tRNA-Asp, -Asn, -His and -Tyr). Catalysis occurs through a double-displacement mechanism. The nucleophile active site attacks the C1' of nucleotide 34 to detach the guanine base from the RNA, forming a covalent enzyme-RNA intermediate. The proton acceptor active site deprotonates the incoming PreQ1, allowing a nucleophilic attack on the C1' of the ribose to form the product. After dissociation, two additional enzymatic reactions on the tRNA convert PreQ1 to queuine (Q), resulting in the hypermodified nucleoside queuosine (7-(((4,5-cis-dihydroxy-2-cyclopenten-1-yl)amino)methyl)-7-deazaguanosine). This chain is Queuine tRNA-ribosyltransferase, found in Shewanella frigidimarina (strain NCIMB 400).